A 455-amino-acid polypeptide reads, in one-letter code: Bifunctional protein GlmU (455 aa).

Residues 1–229 (MLNSAMSVVI…ISETEGVNNR (229 aa)) form a pyrophosphorylase region. UDP-N-acetyl-alpha-D-glucosamine-binding positions include 11 to 14 (LAAG), K25, Q76, 81 to 82 (GT), 103 to 105 (YGD), G140, E154, N169, and N227. D105 provides a ligand contact to Mg(2+). N227 contributes to the Mg(2+) binding site. Residues 230–250 (LQLSRLERIYQAEQAEKLLLA) form a linker region. The tract at residues 251–455 (GVMLRDPARF…KQGWQRPVKK (205 aa)) is N-acetyltransferase. UDP-N-acetyl-alpha-D-glucosamine contacts are provided by R333 and K351. Residue H363 is the Proton acceptor of the active site. Residues Y366 and N377 each contribute to the UDP-N-acetyl-alpha-D-glucosamine site. Residues A380, 386–387 (NY), S405, A423, and R440 contribute to the acetyl-CoA site.

It in the N-terminal section; belongs to the N-acetylglucosamine-1-phosphate uridyltransferase family. The protein in the C-terminal section; belongs to the transferase hexapeptide repeat family. In terms of assembly, homotrimer. Mg(2+) serves as cofactor.

Its subcellular location is the cytoplasm. It catalyses the reaction alpha-D-glucosamine 1-phosphate + acetyl-CoA = N-acetyl-alpha-D-glucosamine 1-phosphate + CoA + H(+). The catalysed reaction is N-acetyl-alpha-D-glucosamine 1-phosphate + UTP + H(+) = UDP-N-acetyl-alpha-D-glucosamine + diphosphate. The protein operates within nucleotide-sugar biosynthesis; UDP-N-acetyl-alpha-D-glucosamine biosynthesis; N-acetyl-alpha-D-glucosamine 1-phosphate from alpha-D-glucosamine 6-phosphate (route II): step 2/2. It participates in nucleotide-sugar biosynthesis; UDP-N-acetyl-alpha-D-glucosamine biosynthesis; UDP-N-acetyl-alpha-D-glucosamine from N-acetyl-alpha-D-glucosamine 1-phosphate: step 1/1. Its pathway is bacterial outer membrane biogenesis; LPS lipid A biosynthesis. Catalyzes the last two sequential reactions in the de novo biosynthetic pathway for UDP-N-acetylglucosamine (UDP-GlcNAc). The C-terminal domain catalyzes the transfer of acetyl group from acetyl coenzyme A to glucosamine-1-phosphate (GlcN-1-P) to produce N-acetylglucosamine-1-phosphate (GlcNAc-1-P), which is converted into UDP-GlcNAc by the transfer of uridine 5-monophosphate (from uridine 5-triphosphate), a reaction catalyzed by the N-terminal domain. The polypeptide is Bifunctional protein GlmU (Salmonella arizonae (strain ATCC BAA-731 / CDC346-86 / RSK2980)).